Here is a 114-residue protein sequence, read N- to C-terminus: Probable divalent-cation tolerance protein cutA homolog (114 aa).

It belongs to the CutA family. Homotrimer.

The sequence is that of Probable divalent-cation tolerance protein cutA homolog from Encephalitozoon cuniculi (strain GB-M1) (Microsporidian parasite).